The primary structure comprises 108 residues: Immunoglobulin kappa variable 11-125 (108 aa).

The tract at residues 1–23 (DVQMIQSPSSLSASLGDIVTMTC) is framework-1. Cys-23 and Cys-88 are oxidised to a cystine. Positions 24–34 (QASQGTSINLN) are complementarity-determining-1. Residues 35–49 (WFQQKPGKAPKLLIY) are framework-2. The complementarity-determining-2 stretch occupies residues 50-56 (GASILED). The tract at residues 57-88 (GVPSRFSGSRYGTDFTLTISSLEDEDMATYFC) is framework-3. Residues 89-97 (LQHSYLPYT) are complementarity-determining-3. Residues 98–108 (FGGGTKLEIKR) form a framework-4 region.

This chain is Immunoglobulin kappa variable 11-125, found in Mus musculus (Mouse).